Reading from the N-terminus, the 480-residue chain is ATP synthase subunit beta (480 aa).

158–165 (GGAGVGKT) provides a ligand contact to ATP.

The protein belongs to the ATPase alpha/beta chains family. F-type ATPases have 2 components, CF(1) - the catalytic core - and CF(0) - the membrane proton channel. CF(1) has five subunits: alpha(3), beta(3), gamma(1), delta(1), epsilon(1). CF(0) has three main subunits: a(1), b(2) and c(9-12). The alpha and beta chains form an alternating ring which encloses part of the gamma chain. CF(1) is attached to CF(0) by a central stalk formed by the gamma and epsilon chains, while a peripheral stalk is formed by the delta and b chains.

It is found in the cell inner membrane. The enzyme catalyses ATP + H2O + 4 H(+)(in) = ADP + phosphate + 5 H(+)(out). Produces ATP from ADP in the presence of a proton gradient across the membrane. The catalytic sites are hosted primarily by the beta subunits. In Acidobacterium capsulatum (strain ATCC 51196 / DSM 11244 / BCRC 80197 / JCM 7670 / NBRC 15755 / NCIMB 13165 / 161), this protein is ATP synthase subunit beta.